We begin with the raw amino-acid sequence, 314 residues long: Porphobilinogen deaminase (314 aa).

An S-(dipyrrolylmethanemethyl)cysteine modification is found at Cys-242.

This sequence belongs to the HMBS family. Monomer. Requires dipyrromethane as cofactor.

It catalyses the reaction 4 porphobilinogen + H2O = hydroxymethylbilane + 4 NH4(+). It participates in porphyrin-containing compound metabolism; protoporphyrin-IX biosynthesis; coproporphyrinogen-III from 5-aminolevulinate: step 2/4. Functionally, tetrapolymerization of the monopyrrole PBG into the hydroxymethylbilane pre-uroporphyrinogen in several discrete steps. The sequence is that of Porphobilinogen deaminase (hemC) from Bacillus subtilis (strain 168).